Here is a 2922-residue protein sequence, read N- to C-terminus: MSRYLGPRLRITRRLGHLSGLTRKKPAFKPLNPVNPFGPRKIIPPGEHGRNKSFKKKPYESCEYDYLIRLKLKQRLRFHYGLTERQLVRYVQQAKKIKGSTGRVLLRLLEMRLDNIVFRLHMAPTIKAARQLISHGHILINKKKVTIPSYQCEPKDIITVAPKIISMELVSRFLSEFDREKSRYDRILQILEFGRKGVTMPTKNLKTSSKTLSKNSQSRKYVKNEKRAKIQSLKIGAVLNVTINHRGRKEADAISYGFGKMIVIHPFFVGKQSINKNVRVIIYKKSKNNKILYTYPANPFYLHLENLRKLNSLDVAKLFSHSNNQISSKFNKKPLKKSITRKSKRSISALILMNGAKMLPKTNLERRKRVNKDSATNLTENKQIKKEFSPSVFVRIVAAKCLNSKSKQKLLNVSSFQSSLKKFNPSFSKDPVAYREKYVYTKTSRALRLFGTRFYATILKNTRDVKNSSFIERKKFDSRIIGKTPKVNLTKTTRKAEAKAPDFYSSIFKKSSDNQSQNFLNAELLKRESQNSSFSSTFNNSNKVEFSNGASLPVTFKSGKVNNTLIPKLNSNKLADQSVNAQLMNVPALFKQYKNIFSKLSSLKNQKNFKKPKYTNLRSKILTNFLFESKNLSLNLNHFHNFIFVVFSKFCKVLVSKTNLNFKIDNILSISQNFKEFFKHRNFEAKSIDSKKFSMDILLFSLKLKHFTKLNNKNVGTEIGKTREFELSSSILDKKIQNDISLLLLLDKMKTHLQTSLNFVNQFFSSEILMNGIRPYFSSIFSFVLKSEELVKTILTNVINSIKTVLTCSKLTTLKISQQSFLGSAASEKLEKTESFFLENNLIEKLVNLNSNQSNTLYKKIINFAMVSIPKAVFLVDYSENQISLLNKYSLYSAKKQKIQMVKTLNFLKRYNLINYSNFENFKQMIQLNIKNHQTILVHFKDSILNKSKLNLRRNKLSPDSELVLNLEQKLLINQTKCKISLLESLKSNSKLSLFSQFNQNCNQILCRTKIFLNILNKKNSLFQKLNLLKDFHLIKGKDYESLKNLLNNQFQLLQKLKSLVSIVDFPQSVSQSSLLNRVLNKNLEKITETFGSISTLWKVLILQKQNKLNVTESVKQNILQNISVAKAEFTQTVLITILNKTDLSAFIKHYQSSKINNFTFISKLHKINLLDKLNKLNLLDDTVFVQMFSDIREKLAVKKLKQTNVVLTKFLEFGTMSKLSQTELLSLDSFIQTAFLNSNSLTNNIQHLGHKERDNFVRSSSFWKKFSFLLTPSLIKKGLENLKTLNSISSSQYSYLILKLQNLYDQNKTLNLGLNKQYVHEKLRIIKTLLVLIAKNVNITTLTSLNLFKNTTWGSKTLLNLGLNRQKELKLMSGLLISQKIKYSSSFQKWEKDEFSFLMTNYIENQYNYLISKILMRGILTKEEAYFYSRENCQDYLTEKLSFLHSETKQILTSIKLYLLRYQFMVQNNKNSSFSPWNLRFQEENFSLKSSISERTLNSSRIFSLKKQKSVLLDKTMYQKLKNFLQKEILSKNMKSLLENKHFILAYLNKELKAKLFYKVSRLQRKNTLLTETEIYEFSNTFKKLTASNLSVKLATNLSTLIAPTNLSTNFTKKIFKIYKSTNIPVYYNLLSNDTTFLDNKIDNVYLSKVLNKLKLQLNNNKLDLLMVNYTNDKLLRLRAKSSMYQTFAKLAFIENGMILNKHLFPVRSAKSVYLKQFNKNLKFVIYLYNLNMLRSRDILSVQQYEQFKDNYENIFKLIKRKTFVISILNKRKKWKFINYGTYQTLFKNISKNLTTKILSLFQQSTEKNFFQKEKVNKQVQYSLEVEALVQQTLEQLVNSSESPNHSLTSLIYRFIEKSIVFTHPSSNSLKQLTIENKTVIKPVIKKALQRLISLQKKLKSLGPWSSKEKIMLQNKQKTLILQSLVSYLQKQETPFNSNFKTVSNKFKQISMFQTLSFAQRKTVLNKLCLNTYFTPNLQTISNAKDLSNEKKSRALALSGQLTNLQFKLQKEYLTKLNVSLLKAEKNESDLISFNESILLMLQKTTGVDLTNYKQFSRIVTNNSNIDKGSLAKEIYTTKLLFEFIRQNLMDNYRKDKFNFELKQVSKFQKSQFLTNILFKGGSFSSRLSLKKCQNNLIKLKISKLLNHIFSVMPFVNNQTTTTGFISYDHIDTLVSFGIISSTMANVLNKKINVQIQKQKLRKTLLSLQNLQKMTFTSSNKFNRLIYSSILMDVFSRLYELKKAKTITERKYVLIKQKLKIFSLFSALNYKLLDLKEKGSISSSKALELKNQIIQKISQKMKKVKTFAKFKQSLKALKGENFSSRLSYLPKDLDSQKTLEKAKAFEFNPSLLKILKSRGRWARVTVKQLVKQKLLTTKQQEKLQTIVDKQNLMKMKKLRRLVSVFVYCRQIVETQRNTVANNSNYEPLMQNVISSVLKSFNGPWKRVLLNLLYKQNFISENLFLSYLTNNTQKTKSSKTKVISLNNNVDTTYTKTKLKRLLTMYYKQICKLRQFQTNREILKGEFEQKLSAILSSVILVLEKGGLDAFKVIYNTKWVNELCQSNLKINNQKNKNSQISSAIREFVSKYNFLKDQYLNTYKKLQLNDKMKLFKMYKTNLLQELVNLEKTIKSPNAQSFEKSEILSISRLEQLKMQGLISTKICNKLTVMLNNSLQRLIKLDRLFALQNLYLVTSEAKAISENASYMNTGAVLEANSSKVQIQTESNIIQNNEQYIKLKQKIFQSYFRYEYKHIEKSVIKQKLLLQRLDSYNLKQKTTKQYKTNLRRKKSKLLSSEQFNSFFQQLLNFLDSRYKSAGRNRRNPRINSIIRRLNQKLSFDKTLTKKFGDHLQTFIDKRFGPALPIPPHLELKRWKIKTSKLQSKQKLNLKYFILPVGIVRDLAPRRSVGLPILERLIVEYYSRN.

Residues 111 to 174 form the S4 RNA-binding domain; sequence MRLDNIVFRL…ISMELVSRFL (64 aa).

This sequence belongs to the universal ribosomal protein uS4 family. Part of the 30S ribosomal subunit. Contacts protein S5. The interaction surface between S4 and S5 is involved in control of translational fidelity.

It localises to the plastid. The protein resides in the chloroplast. In terms of biological role, one of the primary rRNA binding proteins, it binds directly to 16S rRNA where it nucleates assembly of the body of the 30S subunit. Functionally, with S5 and S12 plays an important role in translational accuracy. The chain is Small ribosomal subunit protein uS4c (rps4) from Stigeoclonium helveticum (Green alga).